The sequence spans 247 residues: Cytochrome c oxidase subunit 2 (247 aa).

A signal peptide spans 1 to 11 (MFYLLNSIIMN). Residues 12–38 (DVPTPYGMYFQDSATPNQEGILELHDN) are Mitochondrial intermembrane-facing. Residues 39–59 (IMFYLFIILGLVSWLLFTIVR) form a helical membrane-spanning segment. The Mitochondrial matrix segment spans residues 60–78 (TYSKNPIAYKYIKHGQTIE). The chain crosses the membrane as a helical span at residues 79–101 (IIWTIFPAVILLIIAFPSFILLY). Residues 102 to 247 (LCDEVISPAM…PAFLEWLNEQ (146 aa)) lie on the Mitochondrial intermembrane side of the membrane. Cu cation contacts are provided by His-182, Cys-217, Glu-219, Cys-221, His-225, and Met-228. Position 219 (Glu-219) interacts with Mg(2+).

This sequence belongs to the cytochrome c oxidase subunit 2 family. As to quaternary structure, component of the cytochrome c oxidase (complex IV, CIV), a multisubunit enzyme composed of a catalytic core of 3 subunits and several supernumerary subunits. The complex exists as a monomer or a dimer and forms supercomplexes (SCs) in the inner mitochondrial membrane with ubiquinol-cytochrome c oxidoreductase (cytochrome b-c1 complex, complex III, CIII). Cu cation serves as cofactor. In terms of processing, the signal sequence of COX2 is processed by IMP1.

It localises to the mitochondrion inner membrane. It catalyses the reaction 4 Fe(II)-[cytochrome c] + O2 + 8 H(+)(in) = 4 Fe(III)-[cytochrome c] + 2 H2O + 4 H(+)(out). In terms of biological role, component of the cytochrome c oxidase, the last enzyme in the mitochondrial electron transport chain which drives oxidative phosphorylation. The respiratory chain contains 3 multisubunit complexes succinate dehydrogenase (complex II, CII), ubiquinol-cytochrome c oxidoreductase (cytochrome b-c1 complex, complex III, CIII) and cytochrome c oxidase (complex IV, CIV), that cooperate to transfer electrons derived from NADH and succinate to molecular oxygen, creating an electrochemical gradient over the inner membrane that drives transmembrane transport and the ATP synthase. Cytochrome c oxidase is the component of the respiratory chain that catalyzes the reduction of oxygen to water. Electrons originating from reduced cytochrome c in the intermembrane space (IMS) are transferred via the dinuclear copper A center (CU(A)) of subunit 2 and heme A of subunit 1 to the active site in subunit 1, a binuclear center (BNC) formed by heme A3 and copper B (CU(B)). The BNC reduces molecular oxygen to 2 water molecules using 4 electrons from cytochrome c in the IMS and 4 protons from the mitochondrial matrix. This is Cytochrome c oxidase subunit 2 (COX2) from Kluyveromyces lactis (strain ATCC 8585 / CBS 2359 / DSM 70799 / NBRC 1267 / NRRL Y-1140 / WM37) (Yeast).